A 148-amino-acid polypeptide reads, in one-letter code: uncharacterized protein (148 aa).

This sequence to A.tumefaciens Atu0565/AGR_C_992.

This is an uncharacterized protein from Rhizobium meliloti (strain 1021) (Ensifer meliloti).